A 273-amino-acid chain; its full sequence is MTTVAASTRPQRAEGRGHLAAKLFDGRTRIRELYQEGAAKIRLPDTFDASMEAVIINTAGGLTGGDRMDWSVDAGAGTRIDVTTQACEKIYKASAGTAEVTTSIEVGAQARVDWLPQETILFDRAALSRRLDVDLDEDSEFLAVEAVLLGRKAMGETVETGLFRDRWRIRRSGRLIHAEELRLSDGVAALAARQAVLGGQVAFATLLYAGPLSEAYLGKVRPLVEGSMGGASAWDGKLVVRLAAADGFSLRKILIPVISALRNGAPVPKVWNL.

The protein belongs to the UreD family. UreD, UreF and UreG form a complex that acts as a GTP-hydrolysis-dependent molecular chaperone, activating the urease apoprotein by helping to assemble the nickel containing metallocenter of UreC. The UreE protein probably delivers the nickel.

The protein localises to the cytoplasm. Functionally, required for maturation of urease via the functional incorporation of the urease nickel metallocenter. The sequence is that of Urease accessory protein UreD from Rhizobium leguminosarum bv. viciae.